Here is a 337-residue protein sequence, read N- to C-terminus: Cobalt-precorrin-5B C(1)-methyltransferase (337 aa).

This sequence belongs to the CbiD family.

The catalysed reaction is Co-precorrin-5B + S-adenosyl-L-methionine = Co-precorrin-6A + S-adenosyl-L-homocysteine. Its pathway is cofactor biosynthesis; adenosylcobalamin biosynthesis; cob(II)yrinate a,c-diamide from sirohydrochlorin (anaerobic route): step 6/10. Catalyzes the methylation of C-1 in cobalt-precorrin-5B to form cobalt-precorrin-6A. This is Cobalt-precorrin-5B C(1)-methyltransferase from Methanoculleus marisnigri (strain ATCC 35101 / DSM 1498 / JR1).